The chain runs to 364 residues: Probable UDP-arabinopyranose mutase 1 (364 aa).

Residues 103 to 105 carry the DXD motif motif; sequence DDD. N-linked (Glc...) arginine glycosylation is present at arginine 151.

Belongs to the RGP family. In terms of assembly, homopentamer or homohexamer. Mn(2+) is required as a cofactor. The cofactor is Mg(2+). In terms of processing, reversibly glycosylated by UDP-glucose, UDP-xylose and UDP-galactose, but not UDP-mannose.

It localises to the secreted. Its subcellular location is the cell wall. The protein resides in the cell junction. It is found in the plasmodesma. The protein localises to the golgi apparatus. The catalysed reaction is UDP-beta-L-arabinofuranose = UDP-beta-L-arabinopyranose. Inhibited by inhibitor protein (IP) which may be a form of sucrose synthase. In terms of biological role, probable UDP-L-arabinose mutase involved in the biosynthesis of cell wall non-cellulosic polysaccharides. Was initially shown to possess an autoglycosylating activity which is dependent on the presence of UDP-glucose and manganese. The chain is Probable UDP-arabinopyranose mutase 1 from Pisum sativum (Garden pea).